A 317-amino-acid chain; its full sequence is Serpentine receptor class delta-26 (317 aa).

The next 7 helical transmembrane spans lie at 5–25, 38–58, 83–103, 122–142, 176–196, 227–247, and 258–278; these read LLHT…MYLA, AIIT…FFVM, ACYV…IWMI, SLVF…AAWI, ITLI…YAWI, FQVF…AMFG, and LVSI…ILFV.

Belongs to the nematode receptor-like protein srd family.

The protein localises to the membrane. The chain is Serpentine receptor class delta-26 (srd-26) from Caenorhabditis elegans.